The primary structure comprises 298 residues: Probable alpha-L-glutamate ligase (298 aa).

Residues 104-287 (MQLLSRHGIG…VAGKIIEFLE (184 aa)) form the ATP-grasp domain. Residues lysine 141, 178–179 (EY), aspartate 187, and 211–213 (RSN) each bind ATP. Residues aspartate 248, glutamate 260, and asparagine 262 each contribute to the Mg(2+) site. 3 residues coordinate Mn(2+): aspartate 248, glutamate 260, and asparagine 262.

This sequence belongs to the RimK family. The cofactor is Mg(2+). Mn(2+) is required as a cofactor.

The protein is Probable alpha-L-glutamate ligase of Aeromonas salmonicida (strain A449).